The sequence spans 973 residues: Translation initiation factor IF-2 (973 aa).

Residues 52–388 (PDQEEVKPAA…QAQKPAQPLE (337 aa)) are disordered. Composition is skewed to basic and acidic residues over residues 83–120 (ESRK…DHYK), 128–148 (VPSR…DKAR), 157–172 (QGAR…ERTR), 186–202 (VQQE…RPPF), 210–246 (PQHE…DKGA), 272–288 (RAGE…ETKP), 314–333 (LLDD…EKQK), and 343–360 (KSRE…ERLR). Positions 374–386 (AKPQEQAQKPAQP) are enriched in low complexity. Positions 472-641 (DRPCVVTVMG…LLVAEMSELK (170 aa)) constitute a tr-type G domain. The tract at residues 481–488 (GHVDHGKT) is G1. Residue 481–488 (GHVDHGKT) coordinates GTP. The G2 stretch occupies residues 506 to 510 (GITQH). The tract at residues 527–530 (DTPG) is G3. GTP-binding positions include 527-531 (DTPGH) and 581-584 (NKID). The tract at residues 581–584 (NKID) is G4. Positions 617-619 (SAL) are G5.

This sequence belongs to the TRAFAC class translation factor GTPase superfamily. Classic translation factor GTPase family. IF-2 subfamily.

The protein localises to the cytoplasm. Its function is as follows. One of the essential components for the initiation of protein synthesis. Protects formylmethionyl-tRNA from spontaneous hydrolysis and promotes its binding to the 30S ribosomal subunits. Also involved in the hydrolysis of GTP during the formation of the 70S ribosomal complex. In Pelotomaculum thermopropionicum (strain DSM 13744 / JCM 10971 / SI), this protein is Translation initiation factor IF-2.